Reading from the N-terminus, the 265-residue chain is Mlc titration factor A (265 aa).

Positions 111, 148, 152, and 211 each coordinate Zn(2+).

This sequence belongs to the MtfA family. As to quaternary structure, interacts with Mlc. Zn(2+) serves as cofactor.

It localises to the cytoplasm. In terms of biological role, involved in the modulation of the activity of the glucose-phosphotransferase system (glucose-PTS). Interacts with the transcriptional repressor Mlc, preventing its interaction with DNA and leading to the modulation of expression of genes regulated by Mlc, including ptsG, which encodes the PTS system glucose-specific EIICB component. Its function is as follows. Shows zinc-dependent metallopeptidase activity. The polypeptide is Mlc titration factor A (Escherichia coli O7:K1 (strain IAI39 / ExPEC)).